The sequence spans 125 residues: NADPH-dependent 7-cyano-7-deazaguanine reductase (125 aa).

The active-site Thioimide intermediate is Cys-40. The Proton donor role is filled by Asp-47. Residues 62-64 and 81-82 each bind substrate; these read LET and HE.

It belongs to the GTP cyclohydrolase I family. QueF type 1 subfamily.

It localises to the cytoplasm. It carries out the reaction 7-aminomethyl-7-carbaguanine + 2 NADP(+) = 7-cyano-7-deazaguanine + 2 NADPH + 3 H(+). It participates in tRNA modification; tRNA-queuosine biosynthesis. Its function is as follows. Catalyzes the NADPH-dependent reduction of 7-cyano-7-deazaguanine (preQ0) to 7-aminomethyl-7-deazaguanine (preQ1). The polypeptide is NADPH-dependent 7-cyano-7-deazaguanine reductase (Frankia casuarinae (strain DSM 45818 / CECT 9043 / HFP020203 / CcI3)).